We begin with the raw amino-acid sequence, 330 residues long: Ketol-acid reductoisomerase (NADP(+)) (330 aa).

Residues 3–184 (LPVYYDKDID…GGGRMGVLET (182 aa)) form the KARI N-terminal Rossmann domain. NADP(+)-binding positions include 26–29 (YGAQ), serine 52, and serine 54. Histidine 109 is a catalytic residue. Position 135 (glycine 135) interacts with NADP(+). Positions 185-329 (SFKEECESDL…EILRAPFNHK (145 aa)) constitute a KARI C-terminal knotted domain. Residues aspartate 193, glutamate 197, glutamate 229, and glutamate 233 each coordinate Mg(2+). Residue serine 254 participates in substrate binding.

This sequence belongs to the ketol-acid reductoisomerase family. Mg(2+) is required as a cofactor.

It carries out the reaction (2R)-2,3-dihydroxy-3-methylbutanoate + NADP(+) = (2S)-2-acetolactate + NADPH + H(+). The enzyme catalyses (2R,3R)-2,3-dihydroxy-3-methylpentanoate + NADP(+) = (S)-2-ethyl-2-hydroxy-3-oxobutanoate + NADPH + H(+). It functions in the pathway amino-acid biosynthesis; L-isoleucine biosynthesis; L-isoleucine from 2-oxobutanoate: step 2/4. The protein operates within amino-acid biosynthesis; L-valine biosynthesis; L-valine from pyruvate: step 2/4. Functionally, involved in the biosynthesis of branched-chain amino acids (BCAA). Catalyzes an alkyl-migration followed by a ketol-acid reduction of (S)-2-acetolactate (S2AL) to yield (R)-2,3-dihydroxy-isovalerate. In the isomerase reaction, S2AL is rearranged via a Mg-dependent methyl migration to produce 3-hydroxy-3-methyl-2-ketobutyrate (HMKB). In the reductase reaction, this 2-ketoacid undergoes a metal-dependent reduction by NADPH to yield (R)-2,3-dihydroxy-isovalerate. This chain is Ketol-acid reductoisomerase (NADP(+)), found in Helicobacter pylori (strain Shi470).